Here is a 266-residue protein sequence, read N- to C-terminus: Tropinone reductase homolog At1g07440 (266 aa).

An NADP(+)-binding site is contributed by 18-42; it reads LVTGGTKGIGHAIVEEFAGFGAVIH. Residue Ser151 coordinates substrate. The Proton acceptor role is filled by Tyr164.

This sequence belongs to the short-chain dehydrogenases/reductases (SDR) family. SDR65C subfamily.

This Arabidopsis thaliana (Mouse-ear cress) protein is Tropinone reductase homolog At1g07440.